Consider the following 232-residue polypeptide: Mediator of RNA polymerase II transcription subunit 18 (232 aa).

Belongs to the Mediator complex subunit 18 family. In terms of assembly, component of the Mediator complex.

It localises to the nucleus. Component of the Mediator complex, a coactivator involved in the regulated transcription of nearly all RNA polymerase II-dependent genes. Mediator functions as a bridge to convey information from gene-specific regulatory proteins to the basal RNA polymerase II transcription machinery. Mediator is recruited to promoters by direct interactions with regulatory proteins and serves as a scaffold for the assembly of a functional preinitiation complex with RNA polymerase II and the general transcription factors. In Caenorhabditis elegans, this protein is Mediator of RNA polymerase II transcription subunit 18 (mdt-18).